An 84-amino-acid polypeptide reads, in one-letter code: Small ribosomal subunit protein uS15 (84 aa).

The protein belongs to the universal ribosomal protein uS15 family. Part of the 30S ribosomal subunit. Forms a bridge to the 50S subunit in the 70S ribosome, contacting the 23S rRNA.

Functionally, one of the primary rRNA binding proteins, it binds directly to 16S rRNA where it helps nucleate assembly of the platform of the 30S subunit by binding and bridging several RNA helices of the 16S rRNA. In terms of biological role, forms an intersubunit bridge (bridge B4) with the 23S rRNA of the 50S subunit in the ribosome. The sequence is that of Small ribosomal subunit protein uS15 from Thermosipho melanesiensis (strain DSM 12029 / CIP 104789 / BI429).